The sequence spans 242 residues: tRNA pseudouridine synthase A (242 aa).

Residue Asp51 is the Nucleophile of the active site. Residue Tyr107 coordinates substrate.

It belongs to the tRNA pseudouridine synthase TruA family. Homodimer.

It carries out the reaction uridine(38/39/40) in tRNA = pseudouridine(38/39/40) in tRNA. Its function is as follows. Formation of pseudouridine at positions 38, 39 and 40 in the anticodon stem and loop of transfer RNAs. The protein is tRNA pseudouridine synthase A of Helicobacter pylori (strain P12).